A 376-amino-acid polypeptide reads, in one-letter code: PqqA peptide cyclase (376 aa).

The Radical SAM core domain maps to 4–219 (VPPPLSVLLE…VETARRSLGD (216 aa)). [4Fe-4S] cluster is bound by residues Cys18, Cys22, and Cys25.

Belongs to the radical SAM superfamily. PqqE family. In terms of assembly, interacts with PqqD. The interaction is necessary for activity of PqqE. The cofactor is [4Fe-4S] cluster.

It carries out the reaction [PQQ precursor protein] + S-adenosyl-L-methionine = E-Y cross-linked-[PQQ precursor protein] + 5'-deoxyadenosine + L-methionine + H(+). It functions in the pathway cofactor biosynthesis; pyrroloquinoline quinone biosynthesis. Catalyzes the cross-linking of a glutamate residue and a tyrosine residue in the PqqA protein as part of the biosynthesis of pyrroloquinoline quinone (PQQ). The chain is PqqA peptide cyclase from Xanthomonas campestris pv. campestris (strain B100).